Here is a 228-residue protein sequence, read N- to C-terminus: Prolactin-2B1 (228 aa).

The first 31 residues, Met1–Ser31, serve as a signal peptide directing secretion. Disulfide bonds link Cys89/Cys194 and Cys203/Cys228. The N-linked (GlcNAc...) asparagine glycan is linked to Asn173.

The protein belongs to the somatotropin/prolactin family. In terms of tissue distribution, expression restricted to the placenta in trophoblast cells within the labyrinth zone.

The protein localises to the secreted. In Rattus norvegicus (Rat), this protein is Prolactin-2B1 (Prl2b1).